We begin with the raw amino-acid sequence, 140 residues long: Small ribosomal subunit protein uS19 (140 aa).

Residues 120-140 (RPKHSAPGIGATRSSAHVSKK) are disordered. The span at 131-140 (TRSSAHVSKK) shows a compositional bias: polar residues.

Belongs to the universal ribosomal protein uS19 family.

Functionally, protein S19 forms a complex with S13 that binds strongly to the 16S ribosomal RNA. The polypeptide is Small ribosomal subunit protein uS19 (Nanoarchaeum equitans (strain Kin4-M)).